The sequence spans 212 residues: Orotate phosphoribosyltransferase (212 aa).

Residues arginine 97, lysine 101, histidine 103, and 123–131 (EDLISTGGS) contribute to the 5-phospho-alpha-D-ribose 1-diphosphate site. Serine 127 is an orotate binding site.

This sequence belongs to the purine/pyrimidine phosphoribosyltransferase family. PyrE subfamily. As to quaternary structure, homodimer. Mg(2+) is required as a cofactor.

It carries out the reaction orotidine 5'-phosphate + diphosphate = orotate + 5-phospho-alpha-D-ribose 1-diphosphate. The protein operates within pyrimidine metabolism; UMP biosynthesis via de novo pathway; UMP from orotate: step 1/2. In terms of biological role, catalyzes the transfer of a ribosyl phosphate group from 5-phosphoribose 1-diphosphate to orotate, leading to the formation of orotidine monophosphate (OMP). This chain is Orotate phosphoribosyltransferase, found in Bacteroides thetaiotaomicron (strain ATCC 29148 / DSM 2079 / JCM 5827 / CCUG 10774 / NCTC 10582 / VPI-5482 / E50).